The chain runs to 334 residues: Beta-ketoacyl-[acyl-carrier-protein] synthase III (334 aa).

Catalysis depends on residues Cys-114 and His-253. An ACP-binding region spans residues 254 to 258 (QANIR). The active site involves Asn-283.

This sequence belongs to the thiolase-like superfamily. FabH family. In terms of assembly, homodimer.

It is found in the cytoplasm. The enzyme catalyses malonyl-[ACP] + acetyl-CoA + H(+) = 3-oxobutanoyl-[ACP] + CO2 + CoA. The protein operates within lipid metabolism; fatty acid biosynthesis. Catalyzes the condensation reaction of fatty acid synthesis by the addition to an acyl acceptor of two carbons from malonyl-ACP. Catalyzes the first condensation reaction which initiates fatty acid synthesis and may therefore play a role in governing the total rate of fatty acid production. Possesses both acetoacetyl-ACP synthase and acetyl transacylase activities. Its substrate specificity determines the biosynthesis of branched-chain and/or straight-chain of fatty acids. The protein is Beta-ketoacyl-[acyl-carrier-protein] synthase III of Campylobacter concisus (strain 13826).